The primary structure comprises 24 residues: Glutamate dehydrogenase (24 aa).

Belongs to the Glu/Leu/Phe/Val dehydrogenases family. In terms of assembly, homohexamer.

The protein resides in the cytoplasm. The catalysed reaction is L-glutamate + NAD(+) + H2O = 2-oxoglutarate + NH4(+) + NADH + H(+). It carries out the reaction L-glutamate + NADP(+) + H2O = 2-oxoglutarate + NH4(+) + NADPH + H(+). The protein is Glutamate dehydrogenase (gdhA) of Pyrococcus woesei.